Here is a 290-residue protein sequence, read N- to C-terminus: Diaminopimelate epimerase (290 aa).

Positions 14 and 67 each coordinate substrate. Residue Cys-76 is the Proton donor of the active site. Residues 77-78, Asn-166, Asn-199, and 217-218 each bind substrate; these read GN and ER. Cys-226 (proton acceptor) is an active-site residue. 227–228 is a substrate binding site; that stretch reads GT.

Belongs to the diaminopimelate epimerase family. Homodimer.

It is found in the cytoplasm. The enzyme catalyses (2S,6S)-2,6-diaminopimelate = meso-2,6-diaminopimelate. It functions in the pathway amino-acid biosynthesis; L-lysine biosynthesis via DAP pathway; DL-2,6-diaminopimelate from LL-2,6-diaminopimelate: step 1/1. Functionally, catalyzes the stereoinversion of LL-2,6-diaminopimelate (L,L-DAP) to meso-diaminopimelate (meso-DAP), a precursor of L-lysine and an essential component of the bacterial peptidoglycan. The polypeptide is Diaminopimelate epimerase (Geobacillus thermodenitrificans (strain NG80-2)).